A 391-amino-acid chain; its full sequence is S-adenosylmethionine synthase (391 aa).

Histidine 16 lines the ATP pocket. Aspartate 18 provides a ligand contact to Mg(2+). Glutamate 44 contributes to the K(+) binding site. Residues glutamate 57 and glutamine 101 each coordinate L-methionine. The interval 101–111 is flexible loop; that stretch reads QSADIAQGVDA. Residues 166–168, aspartate 244, 250–251, alanine 267, and lysine 271 each bind ATP; these read DAK and RK. An L-methionine-binding site is contributed by aspartate 244. Lysine 275 contributes to the L-methionine binding site.

Belongs to the AdoMet synthase family. As to quaternary structure, homotetramer; dimer of dimers. It depends on Mg(2+) as a cofactor. The cofactor is K(+).

Its subcellular location is the cytoplasm. The catalysed reaction is L-methionine + ATP + H2O = S-adenosyl-L-methionine + phosphate + diphosphate. It functions in the pathway amino-acid biosynthesis; S-adenosyl-L-methionine biosynthesis; S-adenosyl-L-methionine from L-methionine: step 1/1. Catalyzes the formation of S-adenosylmethionine (AdoMet) from methionine and ATP. The overall synthetic reaction is composed of two sequential steps, AdoMet formation and the subsequent tripolyphosphate hydrolysis which occurs prior to release of AdoMet from the enzyme. The polypeptide is S-adenosylmethionine synthase (Zymomonas mobilis subsp. mobilis (strain ATCC 31821 / ZM4 / CP4)).